The chain runs to 443 residues: Probable glucomannan 4-beta-mannosyltransferase 11 (443 aa).

D52 is an active-site residue. D111 and D113 together coordinate substrate. The active site involves D205. The next 4 membrane-spanning stretches (helical) occupy residues 284–304, 321–341, 400–420, and 421–441; these read IIVH…SVFF, ITLF…FWVL, EMMV…FGKT, and VLYI…IGFI.

It belongs to the glycosyltransferase 2 family. Plant cellulose synthase-like A subfamily.

It localises to the golgi apparatus membrane. It carries out the reaction GDP-mannose + (glucomannan)n = GDP + (glucomannan)n+1.. In terms of biological role, probable mannan synthase which consists of a 4-beta-mannosyltransferase activity on mannan using GDP-mannose. The beta-1,4-mannan product is the backbone for galactomannan synthesis by galactomannan galactosyltransferase. Galactomannan is a noncellulosic polysaccharides of plant cell wall. The polypeptide is Probable glucomannan 4-beta-mannosyltransferase 11 (Arabidopsis thaliana (Mouse-ear cress)).